Consider the following 155-residue polypeptide: Ribosome maturation factor RimP (155 aa).

This sequence belongs to the RimP family.

Its subcellular location is the cytoplasm. In terms of biological role, required for maturation of 30S ribosomal subunits. The chain is Ribosome maturation factor RimP from Staphylococcus aureus (strain bovine RF122 / ET3-1).